Here is a 568-residue protein sequence, read N- to C-terminus: Proline--tRNA ligase (568 aa).

The protein belongs to the class-II aminoacyl-tRNA synthetase family. ProS type 1 subfamily. In terms of assembly, homodimer.

It localises to the cytoplasm. It carries out the reaction tRNA(Pro) + L-proline + ATP = L-prolyl-tRNA(Pro) + AMP + diphosphate. Catalyzes the attachment of proline to tRNA(Pro) in a two-step reaction: proline is first activated by ATP to form Pro-AMP and then transferred to the acceptor end of tRNA(Pro). As ProRS can inadvertently accommodate and process non-cognate amino acids such as alanine and cysteine, to avoid such errors it has two additional distinct editing activities against alanine. One activity is designated as 'pretransfer' editing and involves the tRNA(Pro)-independent hydrolysis of activated Ala-AMP. The other activity is designated 'posttransfer' editing and involves deacylation of mischarged Ala-tRNA(Pro). The misacylated Cys-tRNA(Pro) is not edited by ProRS. In Chlamydia pneumoniae (Chlamydophila pneumoniae), this protein is Proline--tRNA ligase.